We begin with the raw amino-acid sequence, 85 residues long: Putative membrane protein insertion efficiency factor (85 aa).

It belongs to the UPF0161 family.

It localises to the cell membrane. Its function is as follows. Could be involved in insertion of integral membrane proteins into the membrane. This is Putative membrane protein insertion efficiency factor from Leifsonia xyli subsp. xyli (strain CTCB07).